Consider the following 481-residue polypeptide: Aspartyl/glutamyl-tRNA(Asn/Gln) amidotransferase subunit B (481 aa).

This sequence belongs to the GatB/GatE family. GatB subfamily. In terms of assembly, heterotrimer of A, B and C subunits.

The catalysed reaction is L-glutamyl-tRNA(Gln) + L-glutamine + ATP + H2O = L-glutaminyl-tRNA(Gln) + L-glutamate + ADP + phosphate + H(+). It catalyses the reaction L-aspartyl-tRNA(Asn) + L-glutamine + ATP + H2O = L-asparaginyl-tRNA(Asn) + L-glutamate + ADP + phosphate + 2 H(+). Allows the formation of correctly charged Asn-tRNA(Asn) or Gln-tRNA(Gln) through the transamidation of misacylated Asp-tRNA(Asn) or Glu-tRNA(Gln) in organisms which lack either or both of asparaginyl-tRNA or glutaminyl-tRNA synthetases. The reaction takes place in the presence of glutamine and ATP through an activated phospho-Asp-tRNA(Asn) or phospho-Glu-tRNA(Gln). The sequence is that of Aspartyl/glutamyl-tRNA(Asn/Gln) amidotransferase subunit B from Pseudomonas aeruginosa (strain LESB58).